A 285-amino-acid chain; its full sequence is MSIHGILGEQTTDYPTEYSPETLYPIARSMGREVIGWQDDKLEVGFDWWQAFELSWLNEQGISQVAIARFGIPASSPFIVESKSLKLYLNSINFTEFGSLETVQTLIAKDLSKCVQAEVNVELFDLEDEHSGLLIAQPDGICIDDALADSTEKVALTLHPDASLLERNTSDAKISEGKTFSFYSNLLRSNCPVTNQPDWGTLAVSITSNKPVNNANMLRYILSFRQHNGFHEQCVEQIFADLSQYYEPSELMVRAWYTRRGGIDINPCRVSDIALLPVPSRLIRQ.

Position 80 to 82 (80 to 82) interacts with substrate; sequence VES. An NADPH-binding site is contributed by 82–83; the sequence is SK. The Thioimide intermediate role is filled by Cys-191. The active-site Proton donor is Asp-198. A substrate-binding site is contributed by 231–232; it reads HE. 260–261 is a binding site for NADPH; that stretch reads RG.

The protein belongs to the GTP cyclohydrolase I family. QueF type 2 subfamily. In terms of assembly, homodimer.

Its subcellular location is the cytoplasm. The enzyme catalyses 7-aminomethyl-7-carbaguanine + 2 NADP(+) = 7-cyano-7-deazaguanine + 2 NADPH + 3 H(+). It participates in tRNA modification; tRNA-queuosine biosynthesis. Its function is as follows. Catalyzes the NADPH-dependent reduction of 7-cyano-7-deazaguanine (preQ0) to 7-aminomethyl-7-deazaguanine (preQ1). The sequence is that of NADPH-dependent 7-cyano-7-deazaguanine reductase from Psychrobacter cryohalolentis (strain ATCC BAA-1226 / DSM 17306 / VKM B-2378 / K5).